Reading from the N-terminus, the 249-residue chain is tRNA pseudouridine synthase A (249 aa).

Residue Asp53 is the Nucleophile of the active site. Tyr111 contacts substrate.

It belongs to the tRNA pseudouridine synthase TruA family. Homodimer.

The catalysed reaction is uridine(38/39/40) in tRNA = pseudouridine(38/39/40) in tRNA. Functionally, formation of pseudouridine at positions 38, 39 and 40 in the anticodon stem and loop of transfer RNAs. This chain is tRNA pseudouridine synthase A, found in Streptococcus pneumoniae (strain 70585).